Reading from the N-terminus, the 598-residue chain is Integrator complex subunit 11 (598 aa).

Zn(2+)-binding residues include histidine 68, histidine 70, aspartate 72, histidine 73, histidine 157, and aspartate 178. The HXHXDH motif motif lies at 68–73 (HFHLDH). The active site involves glutamate 203. Histidine 414 lines the Zn(2+) pocket. Residues 470–480 (PLPDAKRPRTM) carry the Nuclear localization signal motif.

It belongs to the metallo-beta-lactamase superfamily. RNA-metabolizing metallo-beta-lactamase-like family. INTS11 subfamily. In terms of assembly, component of the Integrator complex, composed of core subunits INTS1, INTS2, INTS3, INTS4, INTS5, INTS6, INTS7, INTS8, INTS9/RC74, INTS10, INTS11/CPSF3L, INTS12, INTS13, INTS14 and INTS15. The core complex associates with protein phosphatase 2A subunits PPP2CA and PPP2R1A, to form the Integrator-PP2A (INTAC) complex. INTS11 is part of the RNA endonuclease subcomplex, composed of INTS4, INTS9, INTS11 and inositol hexakisphosphate (InsP6). Zn(2+) serves as cofactor.

It localises to the nucleus. Its subcellular location is the cytoplasm. In terms of biological role, RNA endonuclease component of the integrator complex, a multiprotein complex that terminates RNA polymerase II (Pol II) transcription in the promoter-proximal region of genes. The integrator complex provides a quality checkpoint during transcription elongation by driving premature transcription termination of transcripts that are unfavorably configured for transcriptional elongation: the complex terminates transcription by (1) catalyzing dephosphorylation of the C-terminal domain (CTD) of Pol II subunit POLR2A/RPB1 and SUPT5H/SPT5, (2) degrading the exiting nascent RNA transcript via endonuclease activity and (3) promoting the release of Pol II from bound DNA. The integrator complex is also involved in terminating the synthesis of non-coding Pol II transcripts, such as enhancer RNAs (eRNAs), small nuclear RNAs (snRNAs), telomerase RNAs and long non-coding RNAs (lncRNAs). Within the integrator complex, INTS11 constitutes the RNA endonuclease subunit that degrades exiting nascent RNA transcripts. The chain is Integrator complex subunit 11 (cpsf3l) from Danio rerio (Zebrafish).